The sequence spans 520 residues: Transactivator/viroplasmin protein (520 aa).

The tract at residues 487–520 (QNASADSGPKDGPPPTRSIVEKEDVPTTSSKQVD) is disordered.

This sequence belongs to the caulimoviridae viroplasmin family.

It localises to the host cytoplasm. Enhances the ribosomal termination-reinitiation event leading to the translation of major open reading frames on the polycistronic viral RNAs. This Arabidopsis thaliana (Mouse-ear cress) protein is Transactivator/viroplasmin protein.